We begin with the raw amino-acid sequence, 203 residues long: Ribosome hibernation promotion factor (203 aa).

It belongs to the HPF/YfiA ribosome-associated protein family. Long HPF subfamily. As to quaternary structure, interacts with 100S ribosomes.

The protein resides in the cytoplasm. In terms of biological role, required for dimerization of active 70S ribosomes into 100S ribosomes in stationary phase; 100S ribosomes are translationally inactive and sometimes present during exponential growth. The chain is Ribosome hibernation promotion factor from Bradyrhizobium diazoefficiens (strain JCM 10833 / BCRC 13528 / IAM 13628 / NBRC 14792 / USDA 110).